Consider the following 411-residue polypeptide: Aspartokinase (411 aa).

Position 7 to 10 (7 to 10) interacts with ATP; sequence KFGG. 25 to 30 is a substrate binding site; it reads RVIEEK. Residue Ser41 coordinates ATP. Residues 47-49, Glu74, 125-126, 150-153, and Ser153 contribute to the substrate site; these read TDE, LN, and RGGS. ATP is bound by residues 173–174 and 179–184; these read TD and FTTDPR. ACT domains are found at residues 264–338 and 344–411; these read VTVF…SETG and IVGS…KSER. Residues 289–291, Gln295, 355–356, 369–370, and 376–377 each bind substrate; these read NVD, VA, QV, and SE.

Belongs to the aspartokinase family. In terms of assembly, tetramer consisting of 2 isoforms Alpha (catalytic and regulation) and of a homodimer of 2 isoforms Beta (regulation).

It carries out the reaction L-aspartate + ATP = 4-phospho-L-aspartate + ADP. The protein operates within amino-acid biosynthesis; L-lysine biosynthesis via DAP pathway; (S)-tetrahydrodipicolinate from L-aspartate: step 1/4. It functions in the pathway amino-acid biosynthesis; L-methionine biosynthesis via de novo pathway; L-homoserine from L-aspartate: step 1/3. It participates in amino-acid biosynthesis; L-threonine biosynthesis; L-threonine from L-aspartate: step 1/5. With respect to regulation, lysine-sensitive. In terms of biological role, catalyzes the phosphorylation of the beta-carboxyl group of aspartic acid with ATP to yield 4-phospho-L-aspartate, which is involved in the branched biosynthetic pathway leading to the biosynthesis of amino acids threonine, isoleucine and methionine. The sequence is that of Aspartokinase (lysC) from Bacillus sp. (strain MGA3).